Reading from the N-terminus, the 293-residue chain is 4-hydroxy-tetrahydrodipicolinate synthase (293 aa).

Residue Thr-45 coordinates pyruvate. Tyr-133 (proton donor/acceptor) is an active-site residue. Lys-161 functions as the Schiff-base intermediate with substrate in the catalytic mechanism. Residue Ile-203 participates in pyruvate binding.

Belongs to the DapA family. In terms of assembly, homotetramer; dimer of dimers.

The protein resides in the cytoplasm. The catalysed reaction is L-aspartate 4-semialdehyde + pyruvate = (2S,4S)-4-hydroxy-2,3,4,5-tetrahydrodipicolinate + H2O + H(+). Its pathway is amino-acid biosynthesis; L-lysine biosynthesis via DAP pathway; (S)-tetrahydrodipicolinate from L-aspartate: step 3/4. Catalyzes the condensation of (S)-aspartate-beta-semialdehyde [(S)-ASA] and pyruvate to 4-hydroxy-tetrahydrodipicolinate (HTPA). The chain is 4-hydroxy-tetrahydrodipicolinate synthase from Shewanella denitrificans (strain OS217 / ATCC BAA-1090 / DSM 15013).